We begin with the raw amino-acid sequence, 278 residues long: Diaminopimelate epimerase (278 aa).

Residues N13, Q49, and N68 each coordinate substrate. C77 serves as the catalytic Proton donor. Substrate contacts are provided by residues 78–79 (GN), N161, N194, and 212–213 (ER). C221 serves as the catalytic Proton acceptor. 222-223 (GT) contacts substrate.

Belongs to the diaminopimelate epimerase family. As to quaternary structure, homodimer.

The protein localises to the cytoplasm. The enzyme catalyses (2S,6S)-2,6-diaminopimelate = meso-2,6-diaminopimelate. It participates in amino-acid biosynthesis; L-lysine biosynthesis via DAP pathway; DL-2,6-diaminopimelate from LL-2,6-diaminopimelate: step 1/1. Catalyzes the stereoinversion of LL-2,6-diaminopimelate (L,L-DAP) to meso-diaminopimelate (meso-DAP), a precursor of L-lysine and an essential component of the bacterial peptidoglycan. This Nitrosomonas eutropha (strain DSM 101675 / C91 / Nm57) protein is Diaminopimelate epimerase.